Reading from the N-terminus, the 722-residue chain is Probable cation-transporting ATPase HI_0290 (722 aa).

Residues 9-75 (KKISIQIGGM…IIHKTGFSAH (67 aa)) form the HMA domain. Positions 20 and 23 each coordinate a metal cation. Helical transmembrane passes span 94–114 (LIVLWIINIPFLIGMLGMIGG), 118–138 (LMLPPIWQFALASIVQLWLAI), 157–177 (VLVSTGTLTIYLYSAFMLFYH), 180–200 (HAMGHVYFEASVMVIGFVSLG), 340–360 (VFVPVVLVISLVTFALTYILT), and 373–393 (VLVIACPCALGLATPAAIMVG). The 4-aspartylphosphate intermediate role is filled by Asp-422. Helical transmembrane passes span 523–543 (IWQIASIVAVSINDEPIGAFA), 608–628 (LGHIVAMVGDGINDAPALASA), 675–695 (LFFALIYNILGIPLAAFGFLS), and 697–717 (IIAGAAMALSSISVLMNALRL). The Mg(2+) site is built by Asp-617 and Asp-621.

This sequence belongs to the cation transport ATPase (P-type) (TC 3.A.3) family. Type IB subfamily.

The protein localises to the cell membrane. It catalyses the reaction ATP + H2O = ADP + phosphate + H(+). The protein is Probable cation-transporting ATPase HI_0290 of Haemophilus influenzae (strain ATCC 51907 / DSM 11121 / KW20 / Rd).